A 233-amino-acid chain; its full sequence is Probable dihydroorotate dehydrogenase B (NAD(+)), electron transfer subunit (233 aa).

An FAD-binding FR-type domain is found at 1–87 (MYRVVTIEEV…RGPYGHGFIK (87 aa)). [2Fe-2S] cluster contacts are provided by C202, C207, C210, and C218.

The protein belongs to the PyrK family. Heterotetramer of 2 PyrK and 2 PyrD type B subunits. The cofactor is [2Fe-2S] cluster. It depends on FAD as a cofactor.

It functions in the pathway pyrimidine metabolism; UMP biosynthesis via de novo pathway; orotate from (S)-dihydroorotate (NAD(+) route): step 1/1. Its function is as follows. Responsible for channeling the electrons from the oxidation of dihydroorotate from the FMN redox center in the PyrD type B subunit to the ultimate electron acceptor NAD(+). The protein is Probable dihydroorotate dehydrogenase B (NAD(+)), electron transfer subunit of Thermococcus kodakarensis (strain ATCC BAA-918 / JCM 12380 / KOD1) (Pyrococcus kodakaraensis (strain KOD1)).